The primary structure comprises 282 residues: Bis(5'-nucleosyl)-tetraphosphatase, symmetrical (282 aa).

It belongs to the Ap4A hydrolase family.

It carries out the reaction P(1),P(4)-bis(5'-adenosyl) tetraphosphate + H2O = 2 ADP + 2 H(+). Its function is as follows. Hydrolyzes diadenosine 5',5'''-P1,P4-tetraphosphate to yield ADP. The chain is Bis(5'-nucleosyl)-tetraphosphatase, symmetrical from Escherichia fergusonii (strain ATCC 35469 / DSM 13698 / CCUG 18766 / IAM 14443 / JCM 21226 / LMG 7866 / NBRC 102419 / NCTC 12128 / CDC 0568-73).